The following is a 748-amino-acid chain: Translation factor GUF1 homolog 1, mitochondrial (748 aa).

Residues 1–29 (MRVGCCLLLKPIRQRLCTASISSRHIMRW) constitute a mitochondrion transit peptide. The 183-residue stretch at 94 to 276 (SHIRNFAVVA…AIIERVPPPT (183 aa)) folds into the tr-type G domain. Residues 103 to 110 (AHVDHGKT), 167 to 171 (DTPGH), and 221 to 224 (TKMD) each bind GTP.

Belongs to the TRAFAC class translation factor GTPase superfamily. Classic translation factor GTPase family. LepA subfamily.

The protein resides in the mitochondrion inner membrane. It carries out the reaction GTP + H2O = GDP + phosphate + H(+). Its function is as follows. Promotes mitochondrial protein synthesis. May act as a fidelity factor of the translation reaction, by catalyzing a one-codon backward translocation of tRNAs on improperly translocated ribosomes. Binds to mitochondrial ribosomes in a GTP-dependent manner. In Trypanosoma cruzi (strain CL Brener), this protein is Translation factor GUF1 homolog 1, mitochondrial.